The sequence spans 217 residues: Cytochrome c biogenesis ATP-binding export protein CcmA (217 aa).

An ABC transporter domain is found at 6-216 (LQLEQLACQR…QYKFFDQGNM (211 aa)). Position 38–45 (38–45 (GHNGIGKT)) interacts with ATP.

Belongs to the ABC transporter superfamily. CcmA exporter (TC 3.A.1.107) family. As to quaternary structure, the complex is composed of two ATP-binding proteins (CcmA) and two transmembrane proteins (CcmB).

It is found in the cell inner membrane. The enzyme catalyses heme b(in) + ATP + H2O = heme b(out) + ADP + phosphate + H(+). Functionally, part of the ABC transporter complex CcmAB involved in the biogenesis of c-type cytochromes; once thought to export heme, this seems not to be the case, but its exact role is uncertain. Responsible for energy coupling to the transport system. In Histophilus somni (strain 129Pt) (Haemophilus somnus), this protein is Cytochrome c biogenesis ATP-binding export protein CcmA.